Reading from the N-terminus, the 316-residue chain is N-acetylmuramic acid 6-phosphate etherase (316 aa).

The SIS domain occupies Ile68–Lys231. Glu96 acts as the Proton donor in catalysis. Glu127 is an active-site residue.

Belongs to the GCKR-like family. MurNAc-6-P etherase subfamily. In terms of assembly, homodimer.

It catalyses the reaction N-acetyl-D-muramate 6-phosphate + H2O = N-acetyl-D-glucosamine 6-phosphate + (R)-lactate. The protein operates within amino-sugar metabolism; N-acetylmuramate degradation. In terms of biological role, specifically catalyzes the cleavage of the D-lactyl ether substituent of MurNAc 6-phosphate, producing GlcNAc 6-phosphate and D-lactate. This chain is N-acetylmuramic acid 6-phosphate etherase, found in Prochlorococcus marinus (strain MIT 9313).